A 268-amino-acid polypeptide reads, in one-letter code: Orotidine 5'-phosphate decarboxylase (268 aa).

Substrate is bound by residues Asp37, 59–61, 91–100, Tyr217, and Arg235; these read KTH and DRKFADIGNT. Lys93 (proton donor) is an active-site residue.

The protein belongs to the OMP decarboxylase family.

It carries out the reaction orotidine 5'-phosphate + H(+) = UMP + CO2. It participates in pyrimidine metabolism; UMP biosynthesis via de novo pathway; UMP from orotate: step 2/2. The polypeptide is Orotidine 5'-phosphate decarboxylase (URA4) (Maudiozyma exigua (Yeast)).